The chain runs to 389 residues: PqqA peptide cyclase (389 aa).

In terms of domain architecture, Radical SAM core spans valine 19 to alanine 234. The [4Fe-4S] cluster site is built by cysteine 33, cysteine 37, and cysteine 40.

It belongs to the radical SAM superfamily. PqqE family. As to quaternary structure, interacts with PqqD. The interaction is necessary for activity of PqqE. It depends on [4Fe-4S] cluster as a cofactor.

The enzyme catalyses [PQQ precursor protein] + S-adenosyl-L-methionine = E-Y cross-linked-[PQQ precursor protein] + 5'-deoxyadenosine + L-methionine + H(+). The protein operates within cofactor biosynthesis; pyrroloquinoline quinone biosynthesis. In terms of biological role, catalyzes the cross-linking of a glutamate residue and a tyrosine residue in the PqqA protein as part of the biosynthesis of pyrroloquinoline quinone (PQQ). In Pseudomonas syringae pv. syringae (strain B728a), this protein is PqqA peptide cyclase.